A 242-amino-acid polypeptide reads, in one-letter code: Type III pantothenate kinase (242 aa).

7 to 14 (DLGNSRFK) contributes to the ATP binding site. Residues Tyr91 and 98 to 101 (GVDR) each bind substrate. The active-site Proton acceptor is Asp100. Residue Thr121 participates in ATP binding. Substrate is bound at residue Thr171.

The protein belongs to the type III pantothenate kinase family. Homodimer. Requires NH4(+) as cofactor. It depends on K(+) as a cofactor.

It localises to the cytoplasm. The enzyme catalyses (R)-pantothenate + ATP = (R)-4'-phosphopantothenate + ADP + H(+). Its pathway is cofactor biosynthesis; coenzyme A biosynthesis; CoA from (R)-pantothenate: step 1/5. Catalyzes the phosphorylation of pantothenate (Pan), the first step in CoA biosynthesis. This is Type III pantothenate kinase from Xanthomonas axonopodis pv. citri (strain 306).